The chain runs to 259 residues: Leucine-rich repeat-containing protein 3B (259 aa).

Positions 1–33 (MNLVDLWLTRSLSMCLLLQSFVLMILCFHSASM) are cleaved as a signal peptide. One can recognise an LRRNT domain in the interval 34-64 (CPKGCLCSSSGGLNVTCSNANLKEIPRDLPP). A glycan (N-linked (GlcNAc...) asparagine) is linked at N47. LRR repeat units lie at residues 65 to 86 (ETVLLYLDSNQITSIPNEIFKD), 89 to 110 (QLRVLNLSKNGIEFIDEHAFKG), and 114 to 135 (TLQTLDLSDNRIQSVHKNAFNN). An N-linked (GlcNAc...) asparagine glycan is attached at N94. The 53-residue stretch at 145 to 197 (NPWHCDCTLQQVLRSMASNHETAHNVICKTSVLDEHAGRPFLNAANDADLCNL) folds into the LRRCT domain. Residues 205–225 (AMLVTMFGWFTMVISYVVYYV) form a helical membrane-spanning segment.

Belongs to the LRRC3 family.

It localises to the membrane. This is Leucine-rich repeat-containing protein 3B (LRRC3B) from Homo sapiens (Human).